The chain runs to 159 residues: Early E3 18.5 kDa glycoprotein (159 aa).

Positions 1–17 (MRYMILGLLALAAVCSA) are cleaved as a signal peptide. The Lumenal segment spans residues 18–123 (AKKVEFKEPA…PPQKCLENTG (106 aa)). Cystine bridges form between cysteine 28-cysteine 45 and cysteine 39-cysteine 100. N-linked (GlcNAc...) asparagine; by host glycosylation is found at asparagine 29 and asparagine 78. A helical transmembrane segment spans residues 124-144 (TFCSTALLITALALVCTLLYL). Residues 145-159 (KYKSRRSFIDEKKMP) are Cytoplasmic-facing. The Di-lysine motif motif lies at 156–159 (KKMP).

The protein belongs to the adenoviridae E19 family. Post-translationally, both disulfide bonds are absolutely critical for the interaction with MHC antigens. N-glycosylated; high-mannose.

The protein localises to the host endoplasmic reticulum membrane. In terms of biological role, binds and retains class I heavy chains in the endoplasmic reticulum during the early period of virus infection, thereby impairing their transport to the cell surface. Also delays the expression of class I alleles that it cannot affect by direct retention. Binds transporters associated with antigen processing (TAP) and acts as a tapasin inhibitor, preventing class I/TAP association. In consequence, infected cells are masked for immune recognition by cytotoxic T-lymphocytes. This is Early E3 18.5 kDa glycoprotein from Homo sapiens (Human).